The sequence spans 441 residues: Protein arginine methyltransferase NDUFAF7, mitochondrial (441 aa).

The transit peptide at Met1–His46 directs the protein to the mitochondrion. Residues Gly415–Gly434 are disordered. Polar residues predominate over residues His418–Pro427.

The protein belongs to the NDUFAF7 family. As to quaternary structure, interacts with NDUFS2.

Its subcellular location is the mitochondrion. The catalysed reaction is L-arginyl-[protein] + 2 S-adenosyl-L-methionine = N(omega),N(omega)'-dimethyl-L-arginyl-[protein] + 2 S-adenosyl-L-homocysteine + 2 H(+). Functionally, arginine methyltransferase involved in the assembly or stability of mitochondrial NADH:ubiquinone oxidoreductase complex (complex I). Acts by mediating symmetric dimethylation of 'Arg-118' of NDUFS2 after it assembles into the complex I, stabilizing the early intermediate complex. The polypeptide is Protein arginine methyltransferase NDUFAF7, mitochondrial (Bos taurus (Bovine)).